A 439-amino-acid chain; its full sequence is Large ribosomal subunit protein mL44 (439 aa).

2 disordered regions span residues 39 to 73 (QSTA…SLPS) and 247 to 282 (KAME…YGNP). The span at 247–257 (KAMEEQDQDKT) shows a compositional bias: basic and acidic residues. A compositionally biased stretch (acidic residues) spans 258–274 (PDEEEAEMVANEQDQDV).

The protein belongs to the ribonuclease III family. Mitochondrion-specific ribosomal protein mL44 subfamily. As to quaternary structure, component of the mitochondrial large ribosomal subunit (mt-LSU). Mature N.crassa 74S mitochondrial ribosomes consist of a small (37S) and a large (54S) subunit. The 37S small subunit contains a 16S ribosomal RNA (16S mt-rRNA) and 32 different proteins. The 54S large subunit contains a 23S rRNA (23S mt-rRNA) and 42 different proteins. mL44 forms a heterodimer with mL57 and stabilizes rRNA expansion segments 1/2 at a membrane-facing protuberance close to the point of attachment of the ribosome to the translocon in the membrane.

The protein localises to the mitochondrion. In terms of biological role, component of the mitochondrial ribosome (mitoribosome), a dedicated translation machinery responsible for the synthesis of mitochondrial genome-encoded proteins, including at least some of the essential transmembrane subunits of the mitochondrial respiratory chain. The mitoribosomes are attached to the mitochondrial inner membrane and translation products are cotranslationally integrated into the membrane. The polypeptide is Large ribosomal subunit protein mL44 (mrpl3) (Neurospora crassa (strain ATCC 24698 / 74-OR23-1A / CBS 708.71 / DSM 1257 / FGSC 987)).